Reading from the N-terminus, the 430-residue chain is Maintenance of mitochondrial morphology protein 1 (430 aa).

Residues 1 to 70 (MSQGLIETTT…NGNTWSFTQG (70 aa)) lie on the Lumenal side of the membrane. The helical transmembrane segment at 71 to 91 (LVIGQISVIFIIIVFVKFFVF) threads the bilayer. The Cytoplasmic segment spans residues 92–430 (ADSSSHIPTK…TPGEFVNSNI (339 aa)). The region spanning 159–387 (ASESLDWFNV…EPRFQVVRLP (229 aa)) is the SMP-LTD domain. The interval 305 to 326 (GYSKENGSADSASDNDEDEDDG) is disordered. A compositionally biased stretch (acidic residues) spans 317–326 (SDNDEDEDDG).

It belongs to the MMM1 family. As to quaternary structure, homodimer. Component of the ER-mitochondria encounter structure (ERMES) or MDM complex, composed of MMM1, MDM10, MDM12 and MDM34. An MMM1 homodimer associates with one molecule of MDM12 on each side in a pairwise head-to-tail manner, and the SMP-LTD domains of MMM1 and MDM12 generate a continuous hydrophobic tunnel for phospholipid trafficking.

Its subcellular location is the endoplasmic reticulum membrane. In terms of biological role, component of the ERMES/MDM complex, which serves as a molecular tether to connect the endoplasmic reticulum (ER) and mitochondria. Components of this complex are involved in the control of mitochondrial shape and protein biogenesis, and function in nonvesicular lipid trafficking between the ER and mitochondria. The MDM12-MMM1 subcomplex functions in the major beta-barrel assembly pathway that is responsible for biogenesis of all outer membrane beta-barrel proteins, and acts in a late step after the SAM complex. The MDM10-MDM12-MMM1 subcomplex further acts in the TOM40-specific pathway after the action of the MDM12-MMM1 complex. Essential for establishing and maintaining the structure of mitochondria and maintenance of mtDNA nucleoids. This chain is Maintenance of mitochondrial morphology protein 1, found in Candida dubliniensis (strain CD36 / ATCC MYA-646 / CBS 7987 / NCPF 3949 / NRRL Y-17841) (Yeast).